We begin with the raw amino-acid sequence, 142 residues long: Hemoglobin subunit alpha (142 aa).

A Globin domain is found at 2 to 142 (VLSPADKTNI…VSTVLTSKYR (141 aa)). Position 4 is a phosphoserine (Ser4). An N6-succinyllysine modification is found at Lys8. Phosphothreonine is present on Thr9. The residue at position 12 (Lys12) is an N6-succinyllysine. The residue at position 17 (Lys17) is an N6-acetyllysine; alternate. Lys17 carries the post-translational modification N6-succinyllysine; alternate. Phosphotyrosine is present on Tyr25. The residue at position 36 (Ser36) is a Phosphoserine. Lys41 carries the post-translational modification N6-succinyllysine. Position 50 is a phosphoserine (Ser50). An O2-binding site is contributed by His59. Residue His88 participates in heme b binding. Ser103 is subject to Phosphoserine. Thr109 carries the post-translational modification Phosphothreonine. Phosphoserine is present on Ser125. 2 positions are modified to phosphothreonine: Thr135 and Thr138. At Ser139 the chain carries Phosphoserine.

The protein belongs to the globin family. As to quaternary structure, heterotetramer of two alpha chains and two beta chains. Red blood cells.

Its function is as follows. Involved in oxygen transport from the lung to the various peripheral tissues. Hemopressin acts as an antagonist peptide of the cannabinoid receptor CNR1. Hemopressin-binding efficiently blocks cannabinoid receptor CNR1 and subsequent signaling. The sequence is that of Hemoglobin subunit alpha (HBA) from Canis latrans (Coyote).